The primary structure comprises 93 residues: Exodeoxyribonuclease 7 small subunit (93 aa).

The segment covering 1 to 17 (MAKSSASSLSSAKPVAA) has biased composition (low complexity). The tract at residues 1 to 22 (MAKSSASSLSSAKPVAAGPDAS) is disordered.

It belongs to the XseB family. Heterooligomer composed of large and small subunits.

The protein localises to the cytoplasm. It catalyses the reaction Exonucleolytic cleavage in either 5'- to 3'- or 3'- to 5'-direction to yield nucleoside 5'-phosphates.. Bidirectionally degrades single-stranded DNA into large acid-insoluble oligonucleotides, which are then degraded further into small acid-soluble oligonucleotides. In Polaromonas naphthalenivorans (strain CJ2), this protein is Exodeoxyribonuclease 7 small subunit.